The chain runs to 118 residues: Putative pterin-4-alpha-carbinolamine dehydratase (118 aa).

It belongs to the pterin-4-alpha-carbinolamine dehydratase family.

It catalyses the reaction (4aS,6R)-4a-hydroxy-L-erythro-5,6,7,8-tetrahydrobiopterin = (6R)-L-erythro-6,7-dihydrobiopterin + H2O. The polypeptide is Putative pterin-4-alpha-carbinolamine dehydratase (Pseudomonas paraeruginosa (strain DSM 24068 / PA7) (Pseudomonas aeruginosa (strain PA7))).